Consider the following 320-residue polypeptide: tRNA-cytidine(32) 2-sulfurtransferase (320 aa).

The PP-loop motif signature appears at 54-59 (SGGKDS). Cys-129, Cys-132, and Cys-220 together coordinate [4Fe-4S] cluster.

The protein belongs to the TtcA family. Homodimer. Requires Mg(2+) as cofactor. [4Fe-4S] cluster serves as cofactor.

The protein localises to the cytoplasm. The enzyme catalyses cytidine(32) in tRNA + S-sulfanyl-L-cysteinyl-[cysteine desulfurase] + AH2 + ATP = 2-thiocytidine(32) in tRNA + L-cysteinyl-[cysteine desulfurase] + A + AMP + diphosphate + H(+). It participates in tRNA modification. Its function is as follows. Catalyzes the ATP-dependent 2-thiolation of cytidine in position 32 of tRNA, to form 2-thiocytidine (s(2)C32). The sulfur atoms are provided by the cysteine/cysteine desulfurase (IscS) system. This is tRNA-cytidine(32) 2-sulfurtransferase from Bordetella bronchiseptica (strain ATCC BAA-588 / NCTC 13252 / RB50) (Alcaligenes bronchisepticus).